The following is an 886-amino-acid chain: Translation initiation factor IF-2 (886 aa).

Disordered stretches follow at residues 46–91 (LDHL…VEVR) and 121–297 (EQQK…HGFT). Polar residues predominate over residues 72-82 (STLSVTGSTGK). Composition is skewed to basic and acidic residues over residues 130 to 163 (AELK…AERK), 175 to 239 (AKSE…DHHL), and 246 to 260 (REAE…EQGT). In terms of domain architecture, tr-type G spans 386-555 (PRAPVVTVMG…LNQSELLELT (170 aa)). Positions 395–402 (GHVDHGKT) are G1. Position 395–402 (395–402 (GHVDHGKT)) interacts with GTP. The tract at residues 420–424 (GITQH) is G2. Positions 441–444 (DTPG) are G3. Residues 441-445 (DTPGH) and 495-498 (NKMD) contribute to the GTP site. Residues 495–498 (NKMD) form a G4 region. Positions 531–533 (SAK) are G5.

It belongs to the TRAFAC class translation factor GTPase superfamily. Classic translation factor GTPase family. IF-2 subfamily.

The protein localises to the cytoplasm. In terms of biological role, one of the essential components for the initiation of protein synthesis. Protects formylmethionyl-tRNA from spontaneous hydrolysis and promotes its binding to the 30S ribosomal subunits. Also involved in the hydrolysis of GTP during the formation of the 70S ribosomal complex. In Pseudoalteromonas translucida (strain TAC 125), this protein is Translation initiation factor IF-2.